A 465-amino-acid polypeptide reads, in one-letter code: Myosin-6 (465 aa).

The Myosin motor domain maps to 1–35 (ILERGDALLVVQWNIRAFTGVKKWPWMELYFEIEP). Residues 36-465 (LLKSAEAEKE…YRRKLEEAQR (430 aa)) adopt a coiled-coil conformation. Residues S285 and S334 each carry the phosphoserine modification. Y456 carries the phosphotyrosine modification.

Muscle myosin is a hexameric protein that consists of 2 heavy chain subunits (MHC), 2 alkali light chain subunits (MLC) and 2 regulatory light chain subunits (MLC-2).

It localises to the cytoplasm. The protein resides in the myofibril. Functionally, muscle contraction. This is Myosin-6 (MYH6) from Oryctolagus cuniculus (Rabbit).